The sequence spans 293 residues: Formamidopyrimidine-DNA glycosylase (293 aa).

Pro-2 serves as the catalytic Schiff-base intermediate with DNA. Glu-3 (proton donor) is an active-site residue. Lys-58 acts as the Proton donor; for beta-elimination activity in catalysis. DNA is bound by residues His-104, Arg-127, and Arg-170. The segment at 257-293 (SVYGREGKPCRNPACGGTVERVVQSGRSTFFCASCQT) adopts an FPG-type zinc-finger fold. Arg-283 (proton donor; for delta-elimination activity) is an active-site residue.

It belongs to the FPG family. Monomer. The cofactor is Zn(2+).

The enzyme catalyses Hydrolysis of DNA containing ring-opened 7-methylguanine residues, releasing 2,6-diamino-4-hydroxy-5-(N-methyl)formamidopyrimidine.. It carries out the reaction 2'-deoxyribonucleotide-(2'-deoxyribose 5'-phosphate)-2'-deoxyribonucleotide-DNA = a 3'-end 2'-deoxyribonucleotide-(2,3-dehydro-2,3-deoxyribose 5'-phosphate)-DNA + a 5'-end 5'-phospho-2'-deoxyribonucleoside-DNA + H(+). In terms of biological role, involved in base excision repair of DNA damaged by oxidation or by mutagenic agents. Acts as a DNA glycosylase that recognizes and removes damaged bases. Has a preference for oxidized purines, such as 7,8-dihydro-8-oxoguanine (8-oxoG). Has AP (apurinic/apyrimidinic) lyase activity and introduces nicks in the DNA strand. Cleaves the DNA backbone by beta-delta elimination to generate a single-strand break at the site of the removed base with both 3'- and 5'-phosphates. This is Formamidopyrimidine-DNA glycosylase from Brucella melitensis biotype 1 (strain ATCC 23456 / CCUG 17765 / NCTC 10094 / 16M).